Reading from the N-terminus, the 163-residue chain is MLRIDPNELELTDRVVHINRCAKVVKGGRRFSFSALVVVGDGQGIVGYGHGKAKEVPEAIRKGVEQAKKNLIRVPLKDRSIPFDVIGKFGAGRVLLKPASAGTGVIAGGAVRAVLEVSGVGDILSKCIGSNNPHNVVRATIDALSRLKSAEELRALRGADTEE.

The S5 DRBM domain occupies 11-74; the sequence is LTDRVVHINR…EQAKKNLIRV (64 aa).

Belongs to the universal ribosomal protein uS5 family. As to quaternary structure, part of the 30S ribosomal subunit. Contacts proteins S4 and S8.

With S4 and S12 plays an important role in translational accuracy. Functionally, located at the back of the 30S subunit body where it stabilizes the conformation of the head with respect to the body. The chain is Small ribosomal subunit protein uS5 from Syntrophotalea carbinolica (strain DSM 2380 / NBRC 103641 / GraBd1) (Pelobacter carbinolicus).